A 279-amino-acid polypeptide reads, in one-letter code: Phosphate import ATP-binding protein PstB (279 aa).

Residues 33 to 274 enclose the ABC transporter domain; it reads LDINKLNLFY…PLKKKTEDYI (242 aa). Position 65 to 72 (65 to 72) interacts with ATP; sequence GPSGCGKS.

The protein belongs to the ABC transporter superfamily. Phosphate importer (TC 3.A.1.7) family. In terms of assembly, the complex is composed of two ATP-binding proteins (PstB), two transmembrane proteins (PstC and PstA) and a solute-binding protein (PstS).

The protein localises to the cell inner membrane. The catalysed reaction is phosphate(out) + ATP + H2O = ADP + 2 phosphate(in) + H(+). In terms of biological role, part of the ABC transporter complex PstSACB involved in phosphate import. Responsible for energy coupling to the transport system. The polypeptide is Phosphate import ATP-binding protein PstB (Colwellia psychrerythraea (strain 34H / ATCC BAA-681) (Vibrio psychroerythus)).